The primary structure comprises 196 residues: FAD-linked sulfhydryl oxidase ERV2 (196 aa).

Over 1–12 the chain is Cytoplasmic; that stretch reads MKQIVKRSHAIR. The chain crosses the membrane as a helical; Signal-anchor span at residues 13 to 35; that stretch reads IVAALGIIGLWMFFSSNELSIAT. Topologically, residues 36–196 are lumenal; it reads PGLIKAKSGI…SLEKEAKQHG (161 aa). An ERV/ALR sulfhydryl oxidase domain is found at 72–174; it reads MGDDKVKKEV…YDCATILEDY (103 aa). Lysine 78, arginine 83, and tryptophan 86 together coordinate FAD. Cysteine 121 and cysteine 124 are oxidised to a cystine. FAD contacts are provided by histidine 127, cysteine 150, histidine 153, asparagine 157, lysine 162, and tyrosine 174. Cysteine 150 and cysteine 167 are disulfide-bonded. The cysteines at positions 176 and 178 are disulfide-linked.

In terms of assembly, homodimer. Interacts with the substrate protein PDI1, forming transient intermolecular disulfide bridges. FAD is required as a cofactor.

It is found in the endoplasmic reticulum membrane. The enzyme catalyses 2 R'C(R)SH + O2 = R'C(R)S-S(R)CR' + H2O2. Functionally, FAD-dependent sulfhydryl oxidase that catalyzes disulfide bond formation in the endoplasmic reticulum lumen in parallel to ERO1. This is FAD-linked sulfhydryl oxidase ERV2 (ERV2) from Saccharomyces cerevisiae (strain ATCC 204508 / S288c) (Baker's yeast).